Here is a 156-residue protein sequence, read N- to C-terminus: S-ribosylhomocysteine lyase (156 aa).

Residues His-56, His-60, and Cys-123 each coordinate Fe cation.

This sequence belongs to the LuxS family. Homodimer. Fe cation is required as a cofactor.

The enzyme catalyses S-(5-deoxy-D-ribos-5-yl)-L-homocysteine = (S)-4,5-dihydroxypentane-2,3-dione + L-homocysteine. Functionally, involved in the synthesis of autoinducer 2 (AI-2) which is secreted by bacteria and is used to communicate both the cell density and the metabolic potential of the environment. The regulation of gene expression in response to changes in cell density is called quorum sensing. Catalyzes the transformation of S-ribosylhomocysteine (RHC) to homocysteine (HC) and 4,5-dihydroxy-2,3-pentadione (DPD). This is S-ribosylhomocysteine lyase from Staphylococcus epidermidis (strain ATCC 35984 / DSM 28319 / BCRC 17069 / CCUG 31568 / BM 3577 / RP62A).